A 249-amino-acid polypeptide reads, in one-letter code: Putative type I specificity subunit S.MpnORF615P (249 aa).

The protein belongs to the type-I restriction system S methylase family. In terms of assembly, the methyltransferase is composed of M and S polypeptides.

In terms of biological role, the specificity (S) subunit of a type I methyltransferase (MTase); this subunit dictates DNA sequence specificity. The single R subunit has multiple frameshifts and is probably not expressed. This Mycoplasma pneumoniae (strain ATCC 29342 / M129 / Subtype 1) (Mycoplasmoides pneumoniae) protein is Putative type I specificity subunit S.MpnORF615P.